The chain runs to 254 residues: Alcohol dehydrogenase (254 aa).

Residue 10 to 33 (FVAGLGGIGLDTSREIVKSGPKNL) coordinates NAD(+). Ser-138 provides a ligand contact to substrate. Tyr-151 serves as the catalytic Proton acceptor.

Belongs to the short-chain dehydrogenases/reductases (SDR) family. In terms of assembly, homodimer.

The enzyme catalyses a primary alcohol + NAD(+) = an aldehyde + NADH + H(+). The catalysed reaction is a secondary alcohol + NAD(+) = a ketone + NADH + H(+). This is Alcohol dehydrogenase (Adh) from Drosophila picticornis (Fruit fly).